Reading from the N-terminus, the 306-residue chain is Nucleotide-binding protein amb4396 (306 aa).

The segment covering 1-14 has biased composition (polar residues); sequence MSDLHSSPTDQTSA. The tract at residues 1-20 is disordered; the sequence is MSDLHSSPTDQTSAPAHAGG. Residue 29–36 coordinates ATP; it reads GMSGAGKT. 77–80 provides a ligand contact to GTP; the sequence is DIRT.

This sequence belongs to the RapZ-like family.

In terms of biological role, displays ATPase and GTPase activities. In Paramagnetospirillum magneticum (strain ATCC 700264 / AMB-1) (Magnetospirillum magneticum), this protein is Nucleotide-binding protein amb4396.